A 240-amino-acid polypeptide reads, in one-letter code: Ribonuclease PH (240 aa).

Residues Arg-87 and 125 to 127 contribute to the phosphate site; that span reads GTR.

The protein belongs to the RNase PH family. As to quaternary structure, homohexameric ring arranged as a trimer of dimers.

The catalysed reaction is tRNA(n+1) + phosphate = tRNA(n) + a ribonucleoside 5'-diphosphate. Phosphorolytic 3'-5' exoribonuclease that plays an important role in tRNA 3'-end maturation. Removes nucleotide residues following the 3'-CCA terminus of tRNAs; can also add nucleotides to the ends of RNA molecules by using nucleoside diphosphates as substrates, but this may not be physiologically important. Probably plays a role in initiation of 16S rRNA degradation (leading to ribosome degradation) during starvation. The protein is Ribonuclease PH of Pseudomonas fluorescens (strain Pf0-1).